We begin with the raw amino-acid sequence, 770 residues long: MNNPSETNKSSMESEDASTGTQTNGLDFQKQPVPVGGAISTAQAQAFLGHLHQVQLAGTSLQAAAQSLNVQSKSSEESGDSQQSSQPSSQPPSVQSAIPQTQLMLAGGQITGLTLTPAQQQLLLQQAQAQAQLLAAAVQQHSASQQHSAAGATISASAATPMTQIPLSQPIQIAQDLQQLQQLQQQNLNLQQFVLVHPTTNLQPAQFIISQTPQGQQGLLQAQNLLTQLPQQSQANLLQPQPSITLTSQPTTPTRTIAAASVQTLPQSQSTPKRIDTPSLEEPSDLEELEQFAKTFKQRRIKLGFTQGDVGLAMGKLYGNDFSQTTISRFEALNLSFKNMCKLKPLLEKWLNDAENLSSDSTASSPSALNSPGLGAEGLNRRRKKRTSIETNIRVALEKSFMENQKPTSEDITLIAEQLNMEKEVIRVWFCNRRQKEKRINPPSSGGTSSSPIKAIFPSPASLVATTPSLVTSSTATTLTVNPVLPLTSAAVTNLSLTDQDLRRGCSWEVLRSLPDRVTTTAGTTDSTSNNNTATVISTAPPASSAVTSPSLSPSPSASASTSEASSASETNTTQTTSTPLPSPLGASQVMVTTPGLQTAAAALQGAAQLPANASLAAMAAAAGLSPGLMAPSQFAAGGALLSLSPGTLGSALSPALMSNSTLATIQALASSGSLPITSLDATGNLVFANAGGAPNIVTAPLFLNPQNLSLLTSNPVSLVSAAAASTGNSAPTASLHASSTSTESIQSSLFTVASASGPASTTTAASKAQ.

Polar residues predominate over residues 1–26 (MNNPSETNKSSMESEDASTGTQTNGL). Disordered stretches follow at residues 1–33 (MNNPSETNKSSMESEDASTGTQTNGLDFQKQPV), 68–97 (LNVQSKSSEESGDSQQSSQPSSQPPSVQSA), 262–285 (VQTLPQSQSTPKRIDTPSLEEPSD), and 357–385 (LSSDSTASSPSALNSPGLGAEGLNRRRKK). Low complexity predominate over residues 80–97 (DSQQSSQPSSQPPSVQSA). Residues 262 to 272 (VQTLPQSQSTP) show a composition bias toward polar residues. A phosphothreonine mark is found at T271 and T277. The POU-specific domain maps to 281–355 (EEPSDLEELE…LLEKWLNDAE (75 aa)). S284 carries the phosphoserine modification. Residues 357–372 (LSSDSTASSPSALNSP) show a composition bias toward low complexity. A DNA-binding region (homeobox) is located at residues 382-441 (RRKKRTSIETNIRVALEKSFMENQKPTSEDITLIAEQLNMEKEVIRVWFCNRRQKEKRIN). S388 and S451 each carry phosphoserine. Over residues 519 to 580 (TTTAGTTDST…TNTTQTTSTP (62 aa)) the composition is skewed to low complexity. Residues 519–589 (TTTAGTTDST…PLPSPLGASQ (71 aa)) are disordered.

This sequence belongs to the POU transcription factor family. Class-2 subfamily. In terms of assembly, interacts with POU2AF1; the interaction increases POU2F1 transactivation activity. Interacts with NR3C1, AR, PGR and HCFC1. Post-translationally, phosphorylated by PRKDC. In terms of tissue distribution, ubiquitously expressed. However, isoforms 4 and 5 are only expressed in lymphocytes.

The protein resides in the nucleus. In terms of biological role, transcription factor that binds to the octamer motif (5'-ATTTGCAT-3') and activates the promoters of the genes for some small nuclear RNAs (snRNA) and of genes such as those for histone H2B and immunoglobulins. Modulates transcription transactivation by NR3C1, AR and PGR. The sequence is that of POU domain, class 2, transcription factor 1 (Pou2f1) from Mus musculus (Mouse).